The following is a 1225-amino-acid chain: Cytosolic carboxypeptidase 1 (1225 aa).

A compositionally biased stretch (acidic residues) spans 366-392; sequence DDVVDESDDNEDTDAETEAEAENEDSD. The disordered stretch occupies residues 366–398; sequence DDVVDESDDNEDTDAETEAEAENEDSDQICKND. Residues 842–1132 enclose the Peptidase M14 domain; that stretch reads YPYTYSTLKM…KFCVGLLRLK (291 aa). 3 residues coordinate Zn(2+): histidine 914, glutamate 917, and histidine 1011. Glutamate 1096 acts as the Proton donor/acceptor in catalysis. A compositionally biased stretch (acidic residues) spans 1181–1193; that stretch reads YSAESNDDVDPDL. The interval 1181–1225 is disordered; the sequence is YSAESNDDVDPDLPENIGDFETSTLEEESFSDSEITRTHMSGQST.

Belongs to the peptidase M14 family. Requires Zn(2+) as cofactor.

It localises to the cytoplasm. The protein localises to the cytosol. It is found in the nucleus. The protein resides in the mitochondrion. It carries out the reaction (L-glutamyl)(n+1)-gamma-L-glutamyl-L-glutamyl-[protein] + H2O = (L-glutamyl)(n)-gamma-L-glutamyl-L-glutamyl-[protein] + L-glutamate. The catalysed reaction is C-terminal L-alpha-aminoacyl-L-glutamyl-L-glutamyl-[tubulin] + H2O = C-terminal L-alpha-aminoacyl-L-glutamyl-[tubulin] + L-glutamate. Metallocarboxypeptidase that mediates protein deglutamylation of tubulin and non-tubulin target proteins. Catalyzes the removal of polyglutamate side chains present on the gamma-carboxyl group of glutamate residues within the C-terminal tail of alpha- and beta-tubulin. Specifically cleaves tubulin long-side-chains, while it is not able to remove the branching point glutamate. Also catalyzes the removal of polyglutamate residues from the carboxy-terminus of alpha-tubulin as well as non-tubulin proteins. This chain is Cytosolic carboxypeptidase 1 (agtpbp1), found in Xenopus laevis (African clawed frog).